Consider the following 129-residue polypeptide: Ferredoxin-1 (129 aa).

In terms of domain architecture, 2Fe-2S ferredoxin-type spans 29–120; that stretch reads SDMDLDDEDY…EVKIVYNAKH (92 aa). Positions 64, 69, 72, and 103 each coordinate [2Fe-2S] cluster.

It belongs to the 2Fe2S plant-type ferredoxin family. Requires [2Fe-2S] cluster as cofactor.

In terms of biological role, ferredoxins are iron-sulfur proteins that transfer electrons in a wide variety of metabolic reactions. In Haloarcula marismortui (strain ATCC 43049 / DSM 3752 / JCM 8966 / VKM B-1809) (Halobacterium marismortui), this protein is Ferredoxin-1 (fer1).